Consider the following 67-residue polypeptide: GVRDAYIADDKNCVYTCAKNSYCNTECTKNGAESGYCQWLGKYGNGCWCIKLPDKVPIRIPGRCRGR.

The LCN-type CS-alpha/beta domain maps to 3–65 (RDAYIADDKN…VPIRIPGRCR (63 aa)). Disulfide bonds link Cys13-Cys64, Cys17-Cys37, Cys23-Cys47, and Cys27-Cys49. Position 65 is an arginine amide (Arg65).

The protein belongs to the long (4 C-C) scorpion toxin superfamily. Sodium channel inhibitor family. Alpha subfamily. Expressed by the venom gland.

It localises to the secreted. In terms of biological role, alpha toxins bind voltage-independently at site-3 of sodium channels (Nav) and inhibit the inactivation of the activated channels, thereby blocking neuronal transmission. Since the experiments have been done on F11 cells (immortalized cell line derived from rat DRG neurons mainly expressing Nav1.3/SCN3A, but also Nav1.7/SCN9A and Nav1.2/SCN2A), it is supposed to act on these channels. The slow of inactivation process is partially reversible. Is lethal to mice. The sequence is that of Alpha-toxin Bu1 from Buthacus macrocentrus (Turkish scorpion).